Here is a 544-residue protein sequence, read N- to C-terminus: Phosphomannomutase (544 aa).

S145 serves as the catalytic Phosphoserine intermediate. Residues S145, D297, D299, and D301 each contribute to the Mg(2+) site.

The protein belongs to the phosphohexose mutase family. Mg(2+) serves as cofactor.

The catalysed reaction is alpha-D-mannose 1-phosphate = D-mannose 6-phosphate. This is Phosphomannomutase (manB) from Mycoplasmoides pirum (Mycoplasma pirum).